A 472-amino-acid chain; its full sequence is Glutamate synthase [NADPH] small chain (472 aa).

A 4Fe-4S ferredoxin-type domain is found at 38-69 (GQAKAQADRCLSCGNPYCEWKCPVHNYIPNWL). [4Fe-4S] cluster is bound by residues Cys47, Cys50, Cys55, and Cys59.

In terms of assembly, aggregate of 4 catalytic active heterodimers, consisting of a large and a small subunit. Requires [4Fe-4S] cluster as cofactor.

The enzyme catalyses 2 L-glutamate + NADP(+) = L-glutamine + 2-oxoglutarate + NADPH + H(+). It functions in the pathway amino-acid biosynthesis; L-glutamate biosynthesis via GLT pathway; L-glutamate from 2-oxoglutarate and L-glutamine (NADP(+) route): step 1/1. Its pathway is energy metabolism; nitrogen metabolism. In terms of biological role, catalyzes the conversion of L-glutamine and 2-oxoglutarate into two molecules of L-glutamate. This Escherichia coli (strain K12) protein is Glutamate synthase [NADPH] small chain (gltD).